A 108-amino-acid chain; its full sequence is Glutaredoxin-1 (108 aa).

The 104-residue stretch at 3–106 (EEFVQQRLAN…DILSSIGVLR (104 aa)) folds into the Glutaredoxin domain. A disulfide bond links C23 and C26.

The protein belongs to the glutaredoxin family.

It localises to the virion. Its function is as follows. Has thioltransferase and dehydroascorbate reductase activities. The protein is Glutaredoxin-1 (OPG075) of Camelpox virus (strain M-96).